A 397-amino-acid chain; its full sequence is Protein irld-34 (397 aa).

The sequence is that of Protein irld-34 from Caenorhabditis elegans.